The chain runs to 173 residues: dCTP deaminase (173 aa).

DCTP-binding positions include Arg-97–Arg-102 and Asp-113. The active-site Proton donor/acceptor is Glu-123. DCTP-binding residues include Tyr-155 and Gln-162.

Belongs to the dCTP deaminase family. As to quaternary structure, homotrimer.

It carries out the reaction dCTP + H2O + H(+) = dUTP + NH4(+). Its pathway is pyrimidine metabolism; dUMP biosynthesis; dUMP from dCTP (dUTP route): step 1/2. Functionally, catalyzes the deamination of dCTP to dUTP. This Acidianus ambivalens (Desulfurolobus ambivalens) protein is dCTP deaminase.